The primary structure comprises 397 residues: Pyruvate dehydrogenase E1 component subunit alpha, mitochondrial (397 aa).

Residues histidine 98, tyrosine 124, arginine 125, glycine 173, valine 175, aspartate 204, glycine 205, alanine 206, asparagine 233, and tyrosine 235 each contribute to the pyruvate site. The thiamine diphosphate site is built by tyrosine 124, arginine 125, glycine 173, valine 175, aspartate 204, glycine 205, alanine 206, and asparagine 233. Aspartate 204 provides a ligand contact to Mg(2+). Residues asparagine 233 and tyrosine 235 each coordinate Mg(2+). Histidine 299 is a binding site for thiamine diphosphate.

Tetramer of 2 alpha and 2 beta subunits. The cofactor is thiamine diphosphate. It depends on Mg(2+) as a cofactor.

It is found in the mitochondrion matrix. It carries out the reaction N(6)-[(R)-lipoyl]-L-lysyl-[protein] + pyruvate + H(+) = N(6)-[(R)-S(8)-acetyldihydrolipoyl]-L-lysyl-[protein] + CO2. E1 activity is regulated by phosphorylation (inactivation) and dephosphorylation (activation) of the alpha subunit. Functionally, the pyruvate dehydrogenase complex catalyzes the overall conversion of pyruvate to acetyl-CoA and CO(2). It contains multiple copies of three enzymatic components: pyruvate dehydrogenase (E1), dihydrolipoamide acetyltransferase (E2) and lipoamide dehydrogenase (E3). This is Pyruvate dehydrogenase E1 component subunit alpha, mitochondrial from Pisum sativum (Garden pea).